The following is a 458-amino-acid chain: tRNA modification GTPase MnmE (458 aa).

The (6S)-5-formyl-5,6,7,8-tetrahydrofolate site is built by arginine 26, glutamate 88, and arginine 127. A TrmE-type G domain is found at 224–378; it reads GLSTAIIGRP…IEERINDIFF (155 aa). Asparagine 234 is a binding site for K(+). GTP contacts are provided by residues 234–239, 253–259, and 278–281; these read NVGKSS, TDIEGTT, and DTAG. Serine 238 contributes to the Mg(2+) binding site. K(+) is bound by residues threonine 253, isoleucine 255, and threonine 258. Threonine 259 is a Mg(2+) binding site. Lysine 458 contributes to the (6S)-5-formyl-5,6,7,8-tetrahydrofolate binding site.

The protein belongs to the TRAFAC class TrmE-Era-EngA-EngB-Septin-like GTPase superfamily. TrmE GTPase family. Homodimer. Heterotetramer of two MnmE and two MnmG subunits. The cofactor is K(+).

The protein resides in the cytoplasm. Its function is as follows. Exhibits a very high intrinsic GTPase hydrolysis rate. Involved in the addition of a carboxymethylaminomethyl (cmnm) group at the wobble position (U34) of certain tRNAs, forming tRNA-cmnm(5)s(2)U34. This is tRNA modification GTPase MnmE from Streptococcus agalactiae serotype Ia (strain ATCC 27591 / A909 / CDC SS700).